Reading from the N-terminus, the 360-residue chain is Uptake hydrogenase small subunit (360 aa).

Residues 1–43 (MVETFYEVMRRQGISRRSFLKYCSLTATSLGLGPSFLPQIAHA) constitute a signal peptide (tat-type signal). [4Fe-4S] cluster is bound by residues C60, C63, C158, C192, H230, C233, C258, and C264. C273, C292, and C295 together coordinate [3Fe-4S] cluster.

The protein belongs to the [NiFe]/[NiFeSe] hydrogenase small subunit family. As to quaternary structure, heterodimer of a large and a small subunit. [4Fe-4S] cluster is required as a cofactor. [3Fe-4S] cluster serves as cofactor. Predicted to be exported by the Tat system. The position of the signal peptide cleavage has been experimentally proven.

The protein localises to the cell membrane. The catalysed reaction is H2 + A = AH2. Functionally, this enzyme recycles the H(2) produced by nitrogenase to increase the production of ATP and to protect nitrogenase against inhibition or damage by O(2) under carbon- or phosphate-limited conditions. The polypeptide is Uptake hydrogenase small subunit (hoxK) (Cupriavidus necator (strain ATCC 17699 / DSM 428 / KCTC 22496 / NCIMB 10442 / H16 / Stanier 337) (Ralstonia eutropha)).